Reading from the N-terminus, the 50-residue chain is Bacteriocin BacSp222 (50 aa).

M1 is subject to N-formylmethionine.

Its subcellular location is the secreted. Its function is as follows. Has bacteriolytic activity against Gram-positive bacteria B.subtilis, L.lactis and M.luteus and several species from genus Staphylococcus including methicillin-resistant S.aureus, with MIC values ranging from 0.11 uM to 7.8 uM. Has no activity against Gram-negative bacteria or fungi. In vitro, has a dose-dependent cytolytic effect on eukaryotic cells. The polypeptide is Bacteriocin BacSp222 (Staphylococcus pseudintermedius).